The chain runs to 468 residues: Serine/threonine-protein phosphatase 2A 55 kDa regulatory subunit B beta isoform (468 aa).

WD repeat units follow at residues 47–86 (SSADIISTVEFNNTGELLATGDKGGRVVIFQREQENKNQP), 112–153 (EIEE…KRPE), 196–234 (AHTYHINSISVNSDYETYMSADDLRINLWNLEITNRSFN), 245–285 (ELTE…LCDK), 304–342 (EIISSISDVKFNHSGRYIMTRDYLTVKVWDLNMENRPIE), 359–400 (ENDC…DVTL), and 435–468 (DFSKKILHTAWHPSENIIAVAATNNLYIFQDKVN).

The protein belongs to the phosphatase 2A regulatory subunit B family. PP2A consists of a common heterodimeric core enzyme, composed of a 36 kDa catalytic subunit (subunit C) and a 65 kDa constant regulatory subunit (PR65 or subunit A), that associates with a variety of regulatory subunits.

The protein resides in the cytoplasm. It is found in the cytoskeleton. The protein localises to the membrane. In terms of biological role, the B regulatory subunit might modulate substrate selectivity and catalytic activity, and might also direct the localization of the catalytic enzyme to a particular subcellular compartment. Negatively controls the initiation of oocyte maturation. This Xenopus laevis (African clawed frog) protein is Serine/threonine-protein phosphatase 2A 55 kDa regulatory subunit B beta isoform (ppp2r2b).